Here is a 433-residue protein sequence, read N- to C-terminus: uncharacterized protein (433 aa).

Positions 258-304 (KNIKSKLLLELRQLKNNITNLQNKITKTMDNVKKIIEEIEQSKNKVT) form a coiled coil.

It belongs to the mimivirus R160 family.

It localises to the virion. This is an uncharacterized protein from Acanthamoeba polyphaga mimivirus (APMV).